The primary structure comprises 246 residues: Bis(5'-nucleosyl)-tetraphosphatase PrpE [asymmetrical] (246 aa).

It belongs to the PrpE family. Requires Ni(2+) as cofactor.

The catalysed reaction is P(1),P(4)-bis(5'-guanosyl) tetraphosphate + H2O = GMP + GTP + 2 H(+). Its function is as follows. Asymmetrically hydrolyzes Ap4p to yield AMP and ATP. The polypeptide is Bis(5'-nucleosyl)-tetraphosphatase PrpE [asymmetrical] (Bacillus cereus (strain Q1)).